The following is a 227-amino-acid chain: Cytochrome c oxidase subunit 2 (227 aa).

Topologically, residues 1–14 (MPYPLQLGLQDATS) are mitochondrial intermembrane. The helical transmembrane segment at 15–45 (PIMEELTHFHDHTLMIVFLISSLVLYIISSM) threads the bilayer. Over 46 to 59 (LTTKLTHTSTMDAQ) the chain is Mitochondrial matrix. A helical membrane pass occupies residues 60 to 87 (EVETIWTILPAMILILIALPSLRILYMM). Residues 88–227 (DEINDPSLTV…YFEDWSASLL (140 aa)) are Mitochondrial intermembrane-facing. Cu cation-binding residues include His-161, Cys-196, Glu-198, Cys-200, His-204, and Met-207. Mg(2+) is bound at residue Glu-198.

Belongs to the cytochrome c oxidase subunit 2 family. Component of the cytochrome c oxidase (complex IV, CIV), a multisubunit enzyme composed of 14 subunits. The complex is composed of a catalytic core of 3 subunits MT-CO1, MT-CO2 and MT-CO3, encoded in the mitochondrial DNA, and 11 supernumerary subunits COX4I, COX5A, COX5B, COX6A, COX6B, COX6C, COX7A, COX7B, COX7C, COX8 and NDUFA4, which are encoded in the nuclear genome. The complex exists as a monomer or a dimer and forms supercomplexes (SCs) in the inner mitochondrial membrane with NADH-ubiquinone oxidoreductase (complex I, CI) and ubiquinol-cytochrome c oxidoreductase (cytochrome b-c1 complex, complex III, CIII), resulting in different assemblies (supercomplex SCI(1)III(2)IV(1) and megacomplex MCI(2)III(2)IV(2)). Found in a complex with TMEM177, COA6, COX18, COX20, SCO1 and SCO2. Interacts with TMEM177 in a COX20-dependent manner. Interacts with COX20. Interacts with COX16. Cu cation serves as cofactor.

It localises to the mitochondrion inner membrane. The catalysed reaction is 4 Fe(II)-[cytochrome c] + O2 + 8 H(+)(in) = 4 Fe(III)-[cytochrome c] + 2 H2O + 4 H(+)(out). Its function is as follows. Component of the cytochrome c oxidase, the last enzyme in the mitochondrial electron transport chain which drives oxidative phosphorylation. The respiratory chain contains 3 multisubunit complexes succinate dehydrogenase (complex II, CII), ubiquinol-cytochrome c oxidoreductase (cytochrome b-c1 complex, complex III, CIII) and cytochrome c oxidase (complex IV, CIV), that cooperate to transfer electrons derived from NADH and succinate to molecular oxygen, creating an electrochemical gradient over the inner membrane that drives transmembrane transport and the ATP synthase. Cytochrome c oxidase is the component of the respiratory chain that catalyzes the reduction of oxygen to water. Electrons originating from reduced cytochrome c in the intermembrane space (IMS) are transferred via the dinuclear copper A center (CU(A)) of subunit 2 and heme A of subunit 1 to the active site in subunit 1, a binuclear center (BNC) formed by heme A3 and copper B (CU(B)). The BNC reduces molecular oxygen to 2 water molecules using 4 electrons from cytochrome c in the IMS and 4 protons from the mitochondrial matrix. In Dugong dugon (Dugong), this protein is Cytochrome c oxidase subunit 2 (MT-CO2).